The chain runs to 285 residues: MKFLLQQIRNMHVKPIKMRWLTGGVNYSYLLSTEDRRNSWLIDPAEPLEVSPKLSAEEKKSIDAIVNTHHHYDHSGGNLALYSILCQENSGHDIKIIGGSKSSPGVTEVPDNLQQYHLGNLRVTCIRTPCHTKDSICYYIKDLETGEQCIFTGDTLFIAGCGRFFEGTGRDMDMALNQIMLRAVGETNWNKVKIYPGHEYTKGNVSFIRAKIYSDIGQNKEFDALEQYCKSNECTTGHFTLRDELGYNPFMRLDDRAVRLAVGDTAGTYPRSVVMQELRKLKNAM.

Residues 1-10 (MKFLLQQIRN) constitute a mitochondrion transit peptide. Zn(2+)-binding residues include His69, His71, Asp73, His74, His131, Asp154, and His198.

It depends on Zn(2+) as a cofactor.

It is found in the mitochondrion matrix. It catalyses the reaction an S-(2-hydroxyacyl)glutathione + H2O = a 2-hydroxy carboxylate + glutathione + H(+). The catalysed reaction is (R)-S-lactoylglutathione + H2O = (R)-lactate + glutathione + H(+). Its pathway is secondary metabolite metabolism; methylglyoxal degradation; (R)-lactate from methylglyoxal: step 2/2. Inhibited by various thiol compounds such as glutathione and coenzyme A. Its function is as follows. Thiolesterase that catalyzes the hydrolysis of S-D-lactoylglutathione to form glutathione and D-lactic acid. Involved in the metabolism of methylglyoxal, a toxic compound for yeast proliferation, by converting methylglyoxal to lactate via S-D-lactoylglutathione by sequential enzyme reactions catalyzed by glyoxalase I and glyoxalase II. The protein is Hydroxyacylglutathione hydrolase, mitochondrial of Saccharomyces cerevisiae (strain ATCC 204508 / S288c) (Baker's yeast).